We begin with the raw amino-acid sequence, 152 residues long: Deoxyuridine 5'-triphosphate nucleotidohydrolase (152 aa).

Substrate-binding positions include R72 to G74, N85, and T89 to D91.

It belongs to the dUTPase family. Mg(2+) is required as a cofactor.

It carries out the reaction dUTP + H2O = dUMP + diphosphate + H(+). It participates in pyrimidine metabolism; dUMP biosynthesis; dUMP from dCTP (dUTP route): step 2/2. This enzyme is involved in nucleotide metabolism: it produces dUMP, the immediate precursor of thymidine nucleotides and it decreases the intracellular concentration of dUTP so that uracil cannot be incorporated into DNA. This Rhodopseudomonas palustris (strain BisB18) protein is Deoxyuridine 5'-triphosphate nucleotidohydrolase.